A 492-amino-acid chain; its full sequence is Protein nucleotidyltransferase YdiU (492 aa).

G94, G96, R97, K117, D129, G130, R180, and R187 together coordinate ATP. D257 serves as the catalytic Proton acceptor. Residues N258 and D267 each coordinate Mg(2+). D267 serves as a coordination point for ATP.

This sequence belongs to the SELO family. Mg(2+) serves as cofactor. Mn(2+) is required as a cofactor.

It catalyses the reaction L-seryl-[protein] + ATP = 3-O-(5'-adenylyl)-L-seryl-[protein] + diphosphate. It carries out the reaction L-threonyl-[protein] + ATP = 3-O-(5'-adenylyl)-L-threonyl-[protein] + diphosphate. The catalysed reaction is L-tyrosyl-[protein] + ATP = O-(5'-adenylyl)-L-tyrosyl-[protein] + diphosphate. The enzyme catalyses L-histidyl-[protein] + UTP = N(tele)-(5'-uridylyl)-L-histidyl-[protein] + diphosphate. It catalyses the reaction L-seryl-[protein] + UTP = O-(5'-uridylyl)-L-seryl-[protein] + diphosphate. It carries out the reaction L-tyrosyl-[protein] + UTP = O-(5'-uridylyl)-L-tyrosyl-[protein] + diphosphate. Its function is as follows. Nucleotidyltransferase involved in the post-translational modification of proteins. It can catalyze the addition of adenosine monophosphate (AMP) or uridine monophosphate (UMP) to a protein, resulting in modifications known as AMPylation and UMPylation. This chain is Protein nucleotidyltransferase YdiU, found in Halalkalibacterium halodurans (strain ATCC BAA-125 / DSM 18197 / FERM 7344 / JCM 9153 / C-125) (Bacillus halodurans).